Here is a 111-residue protein sequence, read N- to C-terminus: uncharacterized protein (111 aa).

It to B.subtilis XkdW.

This is an uncharacterized protein from Bacillus subtilis (strain 168).